Reading from the N-terminus, the 260-residue chain is UPF0246 protein Bmul_1054/BMULJ_02209 (260 aa).

It belongs to the UPF0246 family.

This is UPF0246 protein Bmul_1054/BMULJ_02209 from Burkholderia multivorans (strain ATCC 17616 / 249).